The sequence spans 679 residues: Enzymatic polyprotein (679 aa).

Residues 40–130 (LHCFVDTGAS…LYEPFIQFTD (91 aa)) are protease. Residue Asp45 is part of the active site. In terms of domain architecture, Reverse transcriptase spans 272–452 (LKVIKPSKSP…KKINFLGLEI (181 aa)).

This sequence belongs to the caulimoviridae enzymatic polyprotein family.

The enzyme catalyses DNA(n) + a 2'-deoxyribonucleoside 5'-triphosphate = DNA(n+1) + diphosphate. Encodes for at least two polypeptides: protease (PR) and reverse transcriptase (RT). The protease processes the polyprotein in cis. Reverse transcriptase is multifunctional enzyme that converts the viral RNA genome into dsDNA in viral cytoplasmic capsids. This enzyme displays a DNA polymerase activity that can copy either DNA or RNA templates, and a ribonuclease H (RNase H) activity that cleaves the RNA strand of RNA-DNA heteroduplexes in a partially processive 3'- to 5'-endonucleasic mode. Neo-synthesized pregenomic RNA (pgRNA) are encapsidated, and reverse-transcribed inside the nucleocapsid. Partial (+)DNA is synthesized from the (-)DNA template and generates the relaxed circular DNA (RC-DNA) genome. After budding and infection, the RC-DNA migrates in the nucleus, and is converted into a plasmid-like covalently closed circular DNA (cccDNA). The protein is Enzymatic polyprotein of Cauliflower mosaic virus (strain BBC) (CaMV).